The primary structure comprises 118 residues: Small ribosomal subunit protein uS13 (118 aa).

A disordered region spans residues 94–118; the sequence is SLPLRGQRTKTNARTRKGPRKPIRK.

Belongs to the universal ribosomal protein uS13 family. In terms of assembly, part of the 30S ribosomal subunit. Forms a loose heterodimer with protein S19. Forms two bridges to the 50S subunit in the 70S ribosome.

In terms of biological role, located at the top of the head of the 30S subunit, it contacts several helices of the 16S rRNA. In the 70S ribosome it contacts the 23S rRNA (bridge B1a) and protein L5 of the 50S subunit (bridge B1b), connecting the 2 subunits; these bridges are implicated in subunit movement. Contacts the tRNAs in the A and P-sites. The polypeptide is Small ribosomal subunit protein uS13 (Shewanella sp. (strain W3-18-1)).